Consider the following 287-residue polypeptide: Small ribosomal subunit biogenesis GTPase RsgA (287 aa).

In terms of domain architecture, CP-type G spans 61 to 218 (SSELIRPTVA…LVDTPGFTTL (158 aa)). GTP-binding positions include 110–113 (NKED) and 161–169 (GPSGAGKST). Positions 242, 247, 249, and 255 each coordinate Zn(2+).

It belongs to the TRAFAC class YlqF/YawG GTPase family. RsgA subfamily. In terms of assembly, monomer. Associates with 30S ribosomal subunit, binds 16S rRNA. Zn(2+) serves as cofactor.

It localises to the cytoplasm. In terms of biological role, one of several proteins that assist in the late maturation steps of the functional core of the 30S ribosomal subunit. Helps release RbfA from mature subunits. May play a role in the assembly of ribosomal proteins into the subunit. Circularly permuted GTPase that catalyzes slow GTP hydrolysis, GTPase activity is stimulated by the 30S ribosomal subunit. The protein is Small ribosomal subunit biogenesis GTPase RsgA of Clostridium perfringens (strain 13 / Type A).